A 378-amino-acid chain; its full sequence is MKILVDENMPYARDLFSRLGEVTAVPGRPIPVAQLADADALMVRSVTKVNESLLAGKPIKFVGTATAGTDHVDEAWLKQAGIGFSAAPGCNAIAVVEYVFSSLLMLAERDGFSLHERTVGIVGVGNVGRRLQARLEALGITTLLCDPPRADRGDEGDFRSLNELVQHADILTFHTPLFKDGPYKTLHLADEKLIRSLKPGAILINACRGAVVDNTALLTCLNEGQKLSVVLDVWEGEPELNVELLKKVDIGTPHIAGYTLEGKARGTTQVFEAYSKFIGHEQHVALDTLLPAPEFGRITLHGPLDQPTLKRLVHLVYDVRRDDAPLRKVAGIPGEFDKLRKNYLERREWSSLYVICDDASAASLLCKLGFNAVHHPAR.

Substrate is bound by residues serine 45 and threonine 66. 2 residues coordinate NAD(+): aspartate 146 and threonine 175. Residue arginine 208 is part of the active site. NAD(+) is bound at residue aspartate 232. Glutamate 237 is an active-site residue. The Proton donor role is filled by histidine 254. Glycine 257 is a binding site for NAD(+). Tyrosine 258 lines the substrate pocket.

Belongs to the D-isomer specific 2-hydroxyacid dehydrogenase family. PdxB subfamily. As to quaternary structure, homodimer.

It is found in the cytoplasm. It catalyses the reaction 4-phospho-D-erythronate + NAD(+) = (R)-3-hydroxy-2-oxo-4-phosphooxybutanoate + NADH + H(+). It functions in the pathway cofactor biosynthesis; pyridoxine 5'-phosphate biosynthesis; pyridoxine 5'-phosphate from D-erythrose 4-phosphate: step 2/5. Catalyzes the oxidation of erythronate-4-phosphate to 3-hydroxy-2-oxo-4-phosphonooxybutanoate. In Escherichia coli O6:K15:H31 (strain 536 / UPEC), this protein is Erythronate-4-phosphate dehydrogenase.